The chain runs to 230 residues: Eukaryotic translation initiation factor 4E-1 (230 aa).

Positions 1-53 (MVVEDSQKSTITDEQNPSRVDNDDDDLEDGEILEDADDAASAASKPPSAFLRN) are disordered. The span at 8 to 19 (KSTITDEQNPSR) shows a compositional bias: polar residues. Residues 22 to 38 (NDDDDLEDGEILEDADD) show a composition bias toward acidic residues. Residues 39–49 (AASAASKPPSA) show a composition bias toward low complexity. EIF4G-binding regions lie at residues 55 to 58 (HPLE) and 65 to 101 (FDNPSAKSKQAAWGSSIRPIYTFSTVEEFWSIYNNIH). Residues 73-78 (KQAAWG), lysine 105, and 123-124 (WE) each bind mRNA. Cysteines 128 and 166 form a disulfide. Residues 149–158 (YTLLAMIGEQ) are EIF4G-binding. MRNA contacts are provided by residues 173–178 (RNRQDK) and 218–222 (KKHER).

Belongs to the eukaryotic initiation factor 4E family. EIF4F is a multi-subunit complex, the composition of which varies with external and internal environmental conditions. It is composed of at least EIF4A, EIF4E and EIF4G. EIF4E is also known to interact with other partners. In higher plants two isoforms of EIF4F have been identified, named isoform EIF4F and isoform EIF(iso)4F. Isoform EIF4F has subunits p220 and p26, whereas isoform EIF(iso)4F has subunits p82 and p28. As to quaternary structure, (Microbial infection) Interacts with potyvirus viral genome-linked protein (VPg); this interaction is possible in susceptible hosts but impaired in resistant plants. In terms of processing, according to the redox status, the Cys-128-Cys-166 disulfide bridge may have a role in regulating protein function by affecting its ability to bind capped mRNA.

It localises to the nucleus. It is found in the cytoplasm. Component of the protein complex eIF4F, which is involved in the recognition of the mRNA cap, ATP-dependent unwinding of 5'-terminal secondary structure and recruitment of mRNA to the ribosome. Recognizes and binds the 7-methylguanosine-containing mRNA cap during an early step in the initiation of protein synthesis and facilitates ribosome binding by inducing the unwinding of the mRNAs secondary structures. Key component of recessive resistance to potyviruses. Functionally, (Microbial infection) Susceptibility host factor required for viral infection by recruiting viral RNAs to the host ribosomal complex via an interaction with viral genome-linked protein (VPg). The protein is Eukaryotic translation initiation factor 4E-1 of Phaseolus vulgaris (Kidney bean).